We begin with the raw amino-acid sequence, 223 residues long: Large ribosomal subunit protein bL25 (223 aa).

The protein belongs to the bacterial ribosomal protein bL25 family. CTC subfamily. In terms of assembly, part of the 50S ribosomal subunit; part of the 5S rRNA/L5/L18/L25 subcomplex. Contacts the 5S rRNA. Binds to the 5S rRNA independently of L5 and L18.

Functionally, this is one of the proteins that binds to the 5S RNA in the ribosome where it forms part of the central protuberance. The chain is Large ribosomal subunit protein bL25 from Albidiferax ferrireducens (strain ATCC BAA-621 / DSM 15236 / T118) (Rhodoferax ferrireducens).